The primary structure comprises 291 residues: Lipoyl synthase (291 aa).

Positions 35, 40, 46, 61, 65, 68, and 273 each coordinate [4Fe-4S] cluster. Positions 47 to 262 (FGKRQATFLI…KEKALAMGFE (216 aa)) constitute a Radical SAM core domain.

The protein belongs to the radical SAM superfamily. Lipoyl synthase family. It depends on [4Fe-4S] cluster as a cofactor.

It localises to the cytoplasm. It catalyses the reaction [[Fe-S] cluster scaffold protein carrying a second [4Fe-4S](2+) cluster] + N(6)-octanoyl-L-lysyl-[protein] + 2 oxidized [2Fe-2S]-[ferredoxin] + 2 S-adenosyl-L-methionine + 4 H(+) = [[Fe-S] cluster scaffold protein] + N(6)-[(R)-dihydrolipoyl]-L-lysyl-[protein] + 4 Fe(3+) + 2 hydrogen sulfide + 2 5'-deoxyadenosine + 2 L-methionine + 2 reduced [2Fe-2S]-[ferredoxin]. The protein operates within protein modification; protein lipoylation via endogenous pathway; protein N(6)-(lipoyl)lysine from octanoyl-[acyl-carrier-protein]: step 2/2. In terms of biological role, catalyzes the radical-mediated insertion of two sulfur atoms into the C-6 and C-8 positions of the octanoyl moiety bound to the lipoyl domains of lipoate-dependent enzymes, thereby converting the octanoylated domains into lipoylated derivatives. The protein is Lipoyl synthase of Geobacter sp. (strain M21).